We begin with the raw amino-acid sequence, 669 residues long: Probable serine/threonine-protein kinase DDB_G0291918 (669 aa).

The Protein kinase domain occupies 13–360 (YNNIKELGRG…LKETLNHPFL (348 aa)). ATP is bound by residues 19 to 27 (LGRGVSGVV) and Lys-42. The Proton acceptor role is filled by Asp-141. Over residues 396-405 (QNQQQQQQQQ) the composition is skewed to low complexity. 2 disordered regions span residues 396–518 (QNQQ…APTF) and 530–550 (FPKL…MNWR). Over residues 406-418 (KSFSTSSLPQVNH) the composition is skewed to polar residues. Composition is skewed to low complexity over residues 419-449 (NNDT…NNNN) and 457-494 (QSNN…SSTD).

The protein belongs to the protein kinase superfamily. Ser/Thr protein kinase family.

The catalysed reaction is L-seryl-[protein] + ATP = O-phospho-L-seryl-[protein] + ADP + H(+). It catalyses the reaction L-threonyl-[protein] + ATP = O-phospho-L-threonyl-[protein] + ADP + H(+). The chain is Probable serine/threonine-protein kinase DDB_G0291918 from Dictyostelium discoideum (Social amoeba).